A 471-amino-acid chain; its full sequence is Ribulose bisphosphate carboxylase large chain (471 aa).

Residues Asn115 and Thr165 each coordinate substrate. Lys167 functions as the Proton acceptor in the catalytic mechanism. Residue Lys169 coordinates substrate. Mg(2+) is bound by residues Lys193, Asp195, and Glu196. At Lys193 the chain carries N6-carboxylysine. His286 (proton acceptor) is an active-site residue. The substrate site is built by Arg287, His319, and Ser371.

The protein belongs to the RuBisCO large chain family. Type I subfamily. As to quaternary structure, heterohexadecamer of 8 large chains and 8 small chains. Mg(2+) is required as a cofactor.

It is found in the carboxysome. The enzyme catalyses 2 (2R)-3-phosphoglycerate + 2 H(+) = D-ribulose 1,5-bisphosphate + CO2 + H2O. The catalysed reaction is D-ribulose 1,5-bisphosphate + O2 = 2-phosphoglycolate + (2R)-3-phosphoglycerate + 2 H(+). Its function is as follows. RuBisCO catalyzes two reactions: the carboxylation of D-ribulose 1,5-bisphosphate, the primary event in carbon dioxide fixation, as well as the oxidative fragmentation of the pentose substrate in the photorespiration process. Both reactions occur simultaneously and in competition at the same active site. This chain is Ribulose bisphosphate carboxylase large chain, found in Synechococcus sp. (strain CC9605).